Reading from the N-terminus, the 328-residue chain is GMP reductase (328 aa).

Catalysis depends on Cys174, which acts as the Thioimidate intermediate. Residue 203 to 226 participates in NADP(+) binding; that stretch reads IIADGGIRTHGDIAKSIRFGASMV.

This sequence belongs to the IMPDH/GMPR family. GuaC type 2 subfamily.

It catalyses the reaction IMP + NH4(+) + NADP(+) = GMP + NADPH + 2 H(+). Its function is as follows. Catalyzes the irreversible NADPH-dependent deamination of GMP to IMP. It functions in the conversion of nucleobase, nucleoside and nucleotide derivatives of G to A nucleotides, and in maintaining the intracellular balance of A and G nucleotides. This chain is GMP reductase, found in Staphylococcus saprophyticus subsp. saprophyticus (strain ATCC 15305 / DSM 20229 / NCIMB 8711 / NCTC 7292 / S-41).